The primary structure comprises 411 residues: LL-diaminopimelate aminotransferase (411 aa).

Tyr-16 and Gly-43 together coordinate substrate. Pyridoxal 5'-phosphate contacts are provided by residues Tyr-73, 109-110 (AK), Tyr-133, Asn-188, Tyr-219, and 247-249 (SFS). Residues Lys-110, Tyr-133, and Asn-188 each coordinate substrate. Position 250 is an N6-(pyridoxal phosphate)lysine (Lys-250). Residues Arg-258 and Asn-293 each coordinate pyridoxal 5'-phosphate. 2 residues coordinate substrate: Asn-293 and Arg-389.

The protein belongs to the class-I pyridoxal-phosphate-dependent aminotransferase family. LL-diaminopimelate aminotransferase subfamily. Homodimer. It depends on pyridoxal 5'-phosphate as a cofactor.

The enzyme catalyses (2S,6S)-2,6-diaminopimelate + 2-oxoglutarate = (S)-2,3,4,5-tetrahydrodipicolinate + L-glutamate + H2O + H(+). The protein operates within amino-acid biosynthesis; L-lysine biosynthesis via DAP pathway; LL-2,6-diaminopimelate from (S)-tetrahydrodipicolinate (aminotransferase route): step 1/1. Its function is as follows. Involved in the synthesis of meso-diaminopimelate (m-DAP or DL-DAP), required for both lysine and peptidoglycan biosynthesis. Catalyzes the direct conversion of tetrahydrodipicolinate to LL-diaminopimelate. The chain is LL-diaminopimelate aminotransferase from Methanobrevibacter smithii (strain ATCC 35061 / DSM 861 / OCM 144 / PS).